Here is an 808-residue protein sequence, read N- to C-terminus: ATP-dependent 6-phosphofructokinase (808 aa).

The tract at residues 1–21 (MSSTQAPVEPPKRRRIGVLTS) is disordered. An N-terminal catalytic PFK domain 1 region spans residues 1-389 (MSSTQAPVEP…YHFAYRNTAT (389 aa)). ATP-binding positions include Gly-23, 86-87 (RS), and 116-119 (GDGS). Asp-117 contacts Mg(2+). Substrate contacts are provided by residues 162–164 (SID), Arg-199, 206–208 (MGR), Glu-263, Arg-291, and 297–300 (HTQR). Asp-164 (proton acceptor) is an active-site residue. The interval 390–403 (PDHPKMILPQDKRM) is interdomain linker. Positions 404–808 (RIAIIHVGAP…DIDPSALTSS (405 aa)) are C-terminal regulatory PFK domain 2. Beta-D-fructose 2,6-bisphosphate contacts are provided by residues Arg-480, 537 to 541 (TISNN), Arg-575, 582 to 584 (QGG), Glu-642, Arg-668, 674 to 677 (HFQQ), and Arg-749.

This sequence belongs to the phosphofructokinase type A (PFKA) family. ATP-dependent PFK group I subfamily. Eukaryotic two domain clade 'E' sub-subfamily. As to quaternary structure, homotetramer. It depends on Mg(2+) as a cofactor.

Its subcellular location is the cytoplasm. The enzyme catalyses beta-D-fructose 6-phosphate + ATP = beta-D-fructose 1,6-bisphosphate + ADP + H(+). It participates in carbohydrate degradation; glycolysis; D-glyceraldehyde 3-phosphate and glycerone phosphate from D-glucose: step 3/4. Allosterically activated by ADP, AMP, or fructose 2,6-bisphosphate, and allosterically inhibited by ATP or citrate. Functionally, catalyzes the phosphorylation of D-fructose 6-phosphate to fructose 1,6-bisphosphate by ATP, the first committing step of glycolysis. The polypeptide is ATP-dependent 6-phosphofructokinase (pfkA) (Aspergillus fumigatus (strain ATCC MYA-4609 / CBS 101355 / FGSC A1100 / Af293) (Neosartorya fumigata)).